The primary structure comprises 226 residues: ATP synthase F(0) complex subunit a (226 aa).

Transmembrane regions (helical) follow at residues Ile14–Pro34, Trp68–Leu88, Gln97–Phe117, Ile138–Val158, Ile164–Ile184, and Phe193–Val213.

Belongs to the ATPase A chain family. In terms of assembly, component of the ATP synthase complex composed at least of ATP5F1A/subunit alpha, ATP5F1B/subunit beta, ATP5MC1/subunit c (homooctomer), MT-ATP6/subunit a, MT-ATP8/subunit 8, ATP5ME/subunit e, ATP5MF/subunit f, ATP5MG/subunit g, ATP5MK/subunit k, ATP5MJ/subunit j, ATP5F1C/subunit gamma, ATP5F1D/subunit delta, ATP5F1E/subunit epsilon, ATP5PF/subunit F6, ATP5PB/subunit b, ATP5PD/subunit d, ATP5PO/subunit OSCP. ATP synthase complex consists of a soluble F(1) head domain (subunits alpha(3) and beta(3)) - the catalytic core - and a membrane F(0) domain - the membrane proton channel (subunits c, a, 8, e, f, g, k and j). These two domains are linked by a central stalk (subunits gamma, delta, and epsilon) rotating inside the F1 region and a stationary peripheral stalk (subunits F6, b, d, and OSCP). Interacts with DNAJC30; interaction is direct.

Its subcellular location is the mitochondrion inner membrane. The catalysed reaction is H(+)(in) = H(+)(out). Its function is as follows. Subunit a, of the mitochondrial membrane ATP synthase complex (F(1)F(0) ATP synthase or Complex V) that produces ATP from ADP in the presence of a proton gradient across the membrane which is generated by electron transport complexes of the respiratory chain. ATP synthase complex consist of a soluble F(1) head domain - the catalytic core - and a membrane F(1) domain - the membrane proton channel. These two domains are linked by a central stalk rotating inside the F(1) region and a stationary peripheral stalk. During catalysis, ATP synthesis in the catalytic domain of F(1) is coupled via a rotary mechanism of the central stalk subunits to proton translocation. With the subunit c (ATP5MC1), forms the proton-conducting channel in the F(0) domain, that contains two crucial half-channels (inlet and outlet) that facilitate proton movement from the mitochondrial intermembrane space (IMS) into the matrix. Protons are taken up via the inlet half-channel and released through the outlet half-channel, following a Grotthuss mechanism. This chain is ATP synthase F(0) complex subunit a, found in Tachyglossus aculeatus aculeatus (Southeast Australian short-beaked echidna).